The primary structure comprises 509 residues: ATP synthase subunit alpha, mitochondrial (509 aa).

171–178 is an ATP binding site; it reads GDRQTGKT.

Belongs to the ATPase alpha/beta chains family. In terms of assembly, F-type ATPases have 2 components, CF(1) - the catalytic core - and CF(0) - the membrane proton channel. CF(1) has five subunits: alpha(3), beta(3), gamma(1), delta(1), epsilon(1). CF(0) has three main subunits: a, b and c.

It is found in the mitochondrion. The protein resides in the mitochondrion inner membrane. Its function is as follows. Mitochondrial membrane ATP synthase (F(1)F(0) ATP synthase or Complex V) produces ATP from ADP in the presence of a proton gradient across the membrane which is generated by electron transport complexes of the respiratory chain. F-type ATPases consist of two structural domains, F(1) - containing the extramembraneous catalytic core, and F(0) - containing the membrane proton channel, linked together by a central stalk and a peripheral stalk. During catalysis, ATP synthesis in the catalytic domain of F(1) is coupled via a rotary mechanism of the central stalk subunits to proton translocation. Subunits alpha and beta form the catalytic core in F(1). Rotation of the central stalk against the surrounding alpha(3)beta(3) subunits leads to hydrolysis of ATP in three separate catalytic sites on the beta subunits. Subunit alpha does not bear the catalytic high-affinity ATP-binding sites. The chain is ATP synthase subunit alpha, mitochondrial (ATPA) from Triticum aestivum (Wheat).